We begin with the raw amino-acid sequence, 286 residues long: MDHKKTWHEKLYCHLGQYFLIEKMLYKKKTPHHQVMIFKNSVFGKIMVIDDIVQTTERDEFIYHEMLTHVPIIAHGSIKSVLIIGGGDGGILREVCRYKMIENITMVEIDVNIIDLCKKYFPNHSNQAYQDSRLNLIIDDGLNFIKRTKEKFDLIISDSTDPIGCGKNLFRSEFYFNCKNHLEENGIFVAQNGVFFLQKNETILTYKNLKKYFYDTRFYQANVPTYYGGVMVFAWGTNNIEYRKNSLEKIQIRIKNTKLDFNYYNAKIHISSFYLPQYILNELNES.

One can recognise a PABS domain in the interval 5–238 (KTWHEKLYCH…GVMVFAWGTN (234 aa)). Spermidine-binding residues include histidine 64 and aspartate 88. S-methyl-5'-thioadenosine-binding positions include glutamate 108 and 140–141 (DG). Catalysis depends on aspartate 158, which acts as the Proton acceptor. Position 158–161 (158–161 (DSTD)) interacts with spermidine.

This sequence belongs to the spermidine/spermine synthase family. As to quaternary structure, homodimer or homotetramer.

The protein resides in the cytoplasm. It catalyses the reaction S-adenosyl 3-(methylsulfanyl)propylamine + putrescine = S-methyl-5'-thioadenosine + spermidine + H(+). It functions in the pathway amine and polyamine biosynthesis; spermidine biosynthesis; spermidine from putrescine: step 1/1. Functionally, catalyzes the irreversible transfer of a propylamine group from the amino donor S-adenosylmethioninamine (decarboxy-AdoMet) to putrescine (1,4-diaminobutane) to yield spermidine. The protein is Polyamine aminopropyltransferase of Buchnera aphidicola subsp. Acyrthosiphon pisum (strain 5A).